Here is a 55-residue protein sequence, read N- to C-terminus: Ferredoxin-1 (55 aa).

4Fe-4S ferredoxin-type domains follow at residues Tyr2–Asp27 and Thr28–Glu55. [4Fe-4S] cluster-binding residues include Cys8, Cys11, Cys14, Cys18, Cys37, Cys40, Cys43, and Cys47.

[4Fe-4S] cluster serves as cofactor.

Ferredoxins are iron-sulfur proteins that transfer electrons in a wide variety of metabolic reactions. The protein is Ferredoxin-1 of Rhodospirillum rubrum.